Here is a 549-residue protein sequence, read N- to C-terminus: Glucose-6-phosphate isomerase (549 aa).

The active-site Proton donor is E355. Catalysis depends on residues H386 and K514.

Belongs to the GPI family.

It localises to the cytoplasm. The enzyme catalyses alpha-D-glucose 6-phosphate = beta-D-fructose 6-phosphate. It participates in carbohydrate biosynthesis; gluconeogenesis. Its pathway is carbohydrate degradation; glycolysis; D-glyceraldehyde 3-phosphate and glycerone phosphate from D-glucose: step 2/4. In terms of biological role, catalyzes the reversible isomerization of glucose-6-phosphate to fructose-6-phosphate. The sequence is that of Glucose-6-phosphate isomerase from Salmonella gallinarum (strain 287/91 / NCTC 13346).